The primary structure comprises 254 residues: Thiamine thiazole synthase (254 aa).

NAD(+) is bound by residues serine 36, 55 to 56, glycine 63, valine 127, and 154 to 156; these read EK and HVD. The Fe cation site is built by aspartate 156 and histidine 171. Methionine 219 lines the NAD(+) pocket. Arginine 229 serves as a coordination point for glycine.

The protein belongs to the THI4 family. In terms of assembly, homooctamer; tetramer of dimers. Fe(2+) serves as cofactor.

It catalyses the reaction hydrogen sulfide + glycine + NAD(+) = ADP-5-ethyl-4-methylthiazole-2-carboxylate + nicotinamide + 3 H2O + H(+). Its pathway is cofactor biosynthesis; thiamine diphosphate biosynthesis. Involved in the biosynthesis of the thiazole moiety of thiamine. Catalyzes the conversion of NAD and glycine to adenosine diphosphate 5-(2-hydroxyethyl)-4-methylthiazole-2-carboxylate (ADT), an adenylated thiazole intermediate, using free sulfide as a source of sulfur. In Methanoculleus marisnigri (strain ATCC 35101 / DSM 1498 / JR1), this protein is Thiamine thiazole synthase.